The chain runs to 888 residues: Protein translocase subunit SecA (888 aa).

Residues Gln-81, 99 to 103 (GEGKT), and Asp-489 each bind ATP.

This sequence belongs to the SecA family.

Its subcellular location is the plastid. The protein localises to the chloroplast stroma. It localises to the chloroplast thylakoid membrane. The enzyme catalyses ATP + H2O + cellular proteinSide 1 = ADP + phosphate + cellular proteinSide 2.. Its function is as follows. Has a central role in coupling the hydrolysis of ATP to the transfer of proteins across the thylakoid membrane. This chain is Protein translocase subunit SecA, found in Trieres chinensis (Marine centric diatom).